The sequence spans 349 residues: Mitomycin biosynthesis 6-O-methyltransferase (349 aa).

S-adenosyl-L-methionine is bound by residues S167, G190, 213–214 (ER), 240–241 (DF), and K255. The active-site Proton acceptor is the H259. A substrate-binding site is contributed by N288.

Belongs to the class I-like SAM-binding methyltransferase superfamily. Cation-independent O-methyltransferase family. COMT subfamily. As to quaternary structure, homodimer.

The catalysed reaction is 6-demethylmitomycin A + S-adenosyl-L-methionine = mitomycin A + S-adenosyl-L-homocysteine. The enzyme catalyses 6-demethylmitomycin B + S-adenosyl-L-methionine = mitomycin B + S-adenosyl-L-homocysteine. Completely inhibited by Zn(2+) and Cu(2+). Involved in the biosynthesis of the quinone methoxy group present in the mitomycin A and B, which are used as anticancer agents. In vitro, catalyzes the 6-O-methylation of both C9-beta- and C9-alpha-configured 6-hydroxymitomycins via the transfer of the S-methyl group of S-adenosyl-L-methionine (AdoMet) to the 6-demethylmitomycin A and B. It can also use hydroxyquinone as substrate. The sequence is that of Mitomycin biosynthesis 6-O-methyltransferase from Streptomyces lavendulae.